The chain runs to 901 residues: Nuclear factor of activated T-cells, cytoplasmic 4 (901 aa).

Disordered regions lie at residues 15 to 179 (LVFG…LSSW) and 203 to 362 (NEAA…EDSV). Residues 61-81 (IPRPPPPRPGMHSPPPRPAPS) are compositionally biased toward pro residues. Residues 96–109 (GGPGGNAGGAGGGR) are compositionally biased toward gly residues. The tract at residues 114–119 (PSIRIT) is calcineurin-binding. Over residues 114-123 (PSIRITSISP) the composition is skewed to low complexity. Gly residues predominate over residues 151–165 (GFGGYREAGGQGGGA). Residues 166–179 (FFSPSPGSSSLSSW) are compositionally biased toward low complexity. Residues Ser168 and Ser170 each carry the phosphoserine; by MAPK7 and MAPK14 modification. 2 positions are modified to phosphoserine; by MAPK8 and MAPK9: Ser213 and Ser217. The SP 1 repeat unit spans residues 213 to 229 (SPLPSPRASPRPWTPED). A 2 approximate SP repeats region spans residues 213-293 (SPLPSPRASP…LSRRGSLGEE (81 aa)). Composition is skewed to pro residues over residues 215-227 (LPSPRASPRPWTP) and 254-263 (GPVPASPRPA). The Nuclear localization signal motif lies at 268–270 (KRR). Over residues 272 to 288 (SSSGTPSSASPALSRRG) the composition is skewed to low complexity. The SP 2; approximate repeat unit spans residues 277–293 (PSSASPALSRRGSLGEE). Position 289 is a phosphoserine (Ser289). Phosphoserine; by RPS6KA3 is present on Ser334. The residue at position 344 (Ser344) is a Phosphoserine. The RHD domain maps to 401-582 (SALPPLDWPL…VPIECSQRSA (182 aa)). Residues 430-437 (RAHYETEG) mediate DNA binding. In terms of domain architecture, IPT/TIG spans 586–683 (PQVETYSPSA…KRSPTQSFKF (98 aa)). Positions 672-674 (RRK) match the Nuclear localization signal motif. Lys689 is covalently cross-linked (Glycyl lysine isopeptide (Lys-Gly) (interchain with G-Cter in SUMO2)). 2 disordered regions span residues 695–721 (DSSLRGFPSTSGPPFGPDVDFSPPRPP) and 827–869 (PQSA…FRDS).

Member of the multicomponent NFATC transcription complex that consists of at least two components, a pre-existing cytoplasmic component NFATC2 and an inducible nuclear component NFATC1. Other NFAT proteins, such as NFATC3, or members of the activating protein-1 (AP-1) family and MAF can also bind the complex. NFAT proteins can bind DNA as monomers or dimers. Component of a promoter-binding complex composed of STAT3, NFATC3 and NFATC4; complex formation is enhanced by calcineurin. Interacts with CREBBP; this interaction potentiates transcription activation. Interacts with MAPK8/JNK1 and MAPK9/JNK2. Interacts with GATA4 (via the second Zn finger). Interacts (via N-terminus) with IRAK1 (via C-terminus). Interacts with RPS6KA3. Interacts with HOMER1, HOMER2 and HOMER3; this interaction competes with calcineurin/PPP3CA-binding and hence prevents NFATC4 dephosphorylation and activation. Interacts with ESR1 and ESR2; this interaction decreases NFATC4 transcriptional activity. Interacts with MTOR and MAPK7/ERK5. Interacts with TRIM17; this interaction prevents NFATC3 nuclear localization. Interacts with TCF25 (via C-terminus); the interaction leads to suppression of NFATC4 transcription factor activity and is reduced following stimulation with angiotensin-2. Post-translationally, phosphorylated by NFATC-kinases; dephosphorylated by calcineurin/PPP3CA. Phosphorylated on Ser-168 and Ser-170 by MTOR, IRAK1, MAPK7/ERK5 and MAPK14/p38, on Ser-213 and Ser-217 by MAPK8 and MAPK9, and on Ser-289 and Ser-344 by RPS6KA3. Phosphorylated by GSK3B. Phosphorylation by GSK3B markedly increases NFATC4 ubiquitination. Phosphorylation by MAPK8/JNK1, MAPK9/JNK2 and RPS6KA3 may stimulate NFATC4 transcriptional activity. Phosphorylation at Ser-168 and Ser-170 is stimulated by UV irradiation. In terms of processing, ubiquitinated, leading to degradation by the proteasome. Ubiquitination may be stimulated by GSK3B-dependent phosphorylation. Polyubiquitin linkage mainly occurs through 'Lys-48'. As to expression, widely expressed. In the brain, expressed in neurons. Expressed in the hippocampus (at protein level). In the hippocampus, expressed in both the CA1-CA3 pyramidal cells and the dentate gyrus granular cells. Expressed in a subset of hippocampal cells representing adult-born neurons (at protein level). Expressed in the submandibular gland (at protein level). In the olfactory system, expressed at low levels in the glomerular and granular layers and in the mitral cell layer. In the cerebellum, expressed at moderate levels in granular neurons. Expressed at moderate levels in the choroid plexus and ependymal cells. Expressed in neurons of the cochlear nucleus (at protein level). Expressed at low levels in the heart (at protein level). Expressed in ventricular cardiomyocytes (at protein level). Expressed in the lung.

The protein localises to the cytoplasm. Its subcellular location is the nucleus. Functionally, ca(2+)-regulated transcription factor that is involved in several processes, including the development and function of the immune, cardiovascular, musculoskeletal, and nervous systems. Involved in T-cell activation, stimulating the transcription of cytokine genes, including that of IL2 and IL4. Following JAK/STAT signaling activation and as part of a complex with NFATC3 and STAT3, binds to the alpha-beta E4 promoter region of CRYAB and activates transcription in cardiomyocytes. Along with NFATC3, involved in embryonic heart development. Involved in mitochondrial energy metabolism required for cardiac morphogenesis and function. Transactivates many genes involved in heart physiology. Along with GATA4, binds to and activates NPPB/BNP promoter. Activates NPPA/ANP/ANF and MYH7/beta-MHC transcription. Binds to and transactivates AGTR2 gene promoter. Involved in the regulation of adult hippocampal neurogenesis. Involved in BDNF-driven pro-survival signaling in hippocampal adult-born neurons. Involved in the formation of long-term spatial memory and long-term potentiation. In cochlear nucleus neurons, may play a role in deafferentation-induced apoptosis during a developmental critical period when auditory neurons depend on afferent input for survival. Binds to and activates the BACE1/Beta-secretase 1 promoter, hence may regulate the proteolytic processing of the amyloid precursor protein (APP). Plays a role in adipocyte differentiation. May be involved in myoblast differentiation into myotubes. Binds the consensus DNA sequence 5'-GGAAAAT-3'. In the presence of CREBBP, activates TNF transcription. Binds to PPARG gene promoter and regulates its activity. Binds to PPARG and REG3G gene promoters. The polypeptide is Nuclear factor of activated T-cells, cytoplasmic 4 (Mus musculus (Mouse)).